A 115-amino-acid polypeptide reads, in one-letter code: Large ribosomal subunit protein bL19 (115 aa).

The protein belongs to the bacterial ribosomal protein bL19 family.

This protein is located at the 30S-50S ribosomal subunit interface and may play a role in the structure and function of the aminoacyl-tRNA binding site. This chain is Large ribosomal subunit protein bL19, found in Streptococcus pyogenes serotype M49 (strain NZ131).